A 290-amino-acid polypeptide reads, in one-letter code: Diaminopimelate epimerase (290 aa).

3 residues coordinate substrate: Asn-17, Gln-49, and Asn-69. Cys-78 acts as the Proton donor in catalysis. Substrate-binding positions include 79-80 (GN), Asn-166, Asn-199, and 217-218 (ER). The active-site Proton acceptor is Cys-226. 227–228 (GS) lines the substrate pocket.

Belongs to the diaminopimelate epimerase family. As to quaternary structure, homodimer.

It is found in the cytoplasm. The enzyme catalyses (2S,6S)-2,6-diaminopimelate = meso-2,6-diaminopimelate. Its pathway is amino-acid biosynthesis; L-lysine biosynthesis via DAP pathway; DL-2,6-diaminopimelate from LL-2,6-diaminopimelate: step 1/1. Its function is as follows. Catalyzes the stereoinversion of LL-2,6-diaminopimelate (L,L-DAP) to meso-diaminopimelate (meso-DAP), a precursor of L-lysine and an essential component of the bacterial peptidoglycan. This is Diaminopimelate epimerase from Nitrobacter hamburgensis (strain DSM 10229 / NCIMB 13809 / X14).